The chain runs to 97 residues: HssA/B-like protein 38 (97 aa).

The segment at 1-29 (MTLFSSISSISNPMTSSKSSISSFGSGTS) is disordered.

This sequence belongs to the hssA/B family.

The protein is HssA/B-like protein 38 (hssl38) of Dictyostelium discoideum (Social amoeba).